A 142-amino-acid polypeptide reads, in one-letter code: Large ribosomal subunit protein uL13 (142 aa).

The protein belongs to the universal ribosomal protein uL13 family. As to quaternary structure, part of the 50S ribosomal subunit.

In terms of biological role, this protein is one of the early assembly proteins of the 50S ribosomal subunit, although it is not seen to bind rRNA by itself. It is important during the early stages of 50S assembly. The protein is Large ribosomal subunit protein uL13 of Haemophilus influenzae (strain PittGG).